A 265-amino-acid polypeptide reads, in one-letter code: Probable esterase tazC (265 aa).

Active-site charge relay system residues include serine 119, aspartate 209, and histidine 236.

The protein belongs to the LovG family.

The protein operates within secondary metabolite biosynthesis. In terms of biological role, probable esterase; part of the gene cluster that mediates the biosynthesis of azaterrilone A and other azaphilones, a class of fungal metabolites characterized by a highly oxygenated pyrano-quinone bicyclic core and exhibiting a broad range of bioactivities. The first step of the pathway begins with the non-reducing polyketide synthase tazA that assembles one acetyl-CoA starter unit, five malonyl-CoA units, and catalyzes a series of Claisen condensations, methylation, PT-mediated cyclization, and finally releases the first hexaketide precursor through the R-domain. The tazA product then undergoes reduction on its terminal ketone and the following pyran-ring formation by yet undetermined enzyme(s). Dehydration and enoyl reduction, possibly involving the trans-enoyl reductase tazE leads to the next intermediate. TazD is predicted as an acetyltransferase and might catalyze the acetylation steps leading to the synthesis of azaterrilone A. Azaterrilone A is not the final product of the taz pathway and both the highly reducing polyketide synthase tazB and the dual enzyme tazHJ catalyze late steps of the pathway, leading to the production of the 2 final stereoisomers that contain additional polyketide modification whose structures have still to be determined. In Aspergillus terreus (strain NIH 2624 / FGSC A1156), this protein is Probable esterase tazC.